A 458-amino-acid chain; its full sequence is MFAKAQRVHFIGIGGIGMSGIAEIVLNLGYAVSGSDLRRTSITARLESLGVVLFEGHAAANVIGSGVVVVSSAIDEENPEVREARARKIPVIQRAEMLAELMRLKYGIAVAGMHGKTTTTSMIASVLAAGELDPTVVVGGRVDALGSNARLGNSHYLVAEADESDRSFLKLSPILTVVTNLDREHMDCYRDMADVEDAFLEFMNRVPFYGANVACIDNPQLAALLPRVRRRVFTYGTSLGADFVVRMLPPAPEVRSRFEIASAQSVLGPFDLHVPGIHNVLNAAAAVAIAVQLDLKEQAIVQGLKSFRGVDRRFQLKGVVDGITIIDDYGHHPTEIRATLRAARDCGYANIHVLFQPHRYSRTRDLLDEFVTSFADASTVEMLDIYAASEAPLPGITSAALVQSIGQPGVRYAASTEEAVTAILDRAAPGDLILTLGAGNVSQLAPLLVERLQSRLPA.

112 to 118 (GMHGKTT) provides a ligand contact to ATP.

The protein belongs to the MurCDEF family.

The protein localises to the cytoplasm. The enzyme catalyses UDP-N-acetyl-alpha-D-muramate + L-alanine + ATP = UDP-N-acetyl-alpha-D-muramoyl-L-alanine + ADP + phosphate + H(+). It participates in cell wall biogenesis; peptidoglycan biosynthesis. Functionally, cell wall formation. The polypeptide is UDP-N-acetylmuramate--L-alanine ligase (Acidobacterium capsulatum (strain ATCC 51196 / DSM 11244 / BCRC 80197 / JCM 7670 / NBRC 15755 / NCIMB 13165 / 161)).